The sequence spans 416 residues: Floricaula/leafy homolog 2 (416 aa).

Positions 154-237 (EGLSEEPVQQ…DASGGISERQ (84 aa)) are disordered. Over residues 210 to 225 (AEEDEETEEGQEDDWN) the composition is skewed to acidic residues. 3 DNA-binding regions span residues 238-242 (REHPF), 307-314 (NKPKMRHY), and 378-381 (YVPT).

The protein belongs to the FLO/LFY family. As to expression, expressed in floral meristems and in indeterminate vegetative meristems.

It is found in the nucleus. Probable transcription factor that act to specify determinacy in the progenitor cells for both flowers and leaves. This chain is Floricaula/leafy homolog 2 (FL2), found in Nicotiana tabacum (Common tobacco).